The primary structure comprises 257 residues: TLC domain-containing protein 3A (257 aa).

Helical transmembrane passes span 1 to 21 (MLLT…LSIW), 42 to 62 (LVSS…IISC), 71 to 91 (WLAT…FYAM), 114 to 134 (LIEN…LVPI), 142 to 162 (LGDF…FVSL), 181 to 201 (GILT…FMYW), and 220 to 240 (LHCN…FSLL). The TLC domain occupies 33 to 249 (DDCLTVGTRL…LCKKAARLFD (217 aa)).

Interacts with GGT7 isoform 3 and SLC3A2.

It is found in the cell membrane. The polypeptide is TLC domain-containing protein 3A (Tlcd3a) (Mus musculus (Mouse)).